The following is an 80-amino-acid chain: Omega-conotoxin-like 2/7 (80 aa).

The N-terminal stretch at 1 to 22 (MKLTCMMIVAVMFLTASIFITA) is a signal peptide. The propeptide occupies 23 to 51 (DNSRNGIENLPRMRRHEMKKPKASKLNKR). Intrachain disulfides connect Cys53/Cys71, Cys60/Cys75, and Cys70/Cys79.

The protein belongs to the conotoxin O1 superfamily. Expressed by the venom duct.

Its subcellular location is the secreted. In terms of biological role, omega-conotoxins act at presynaptic membranes, they bind and block voltage-gated calcium channels (Cav). The polypeptide is Omega-conotoxin-like 2/7 (Conus imperialis (Imperial cone)).